The following is a 328-amino-acid chain: MAKDIRVLLYYLYTPIENAEQFAADHLAFCKSIGLKGRILVADEGINGTVSGDYETTQKYMDYVHSLPGMEELWFKIDEESEQAFKKMFVRYKKEIVHLGLEDNDFDNDINPLETTGAYLSPKEFKEALLDKDTVVLDTRNDYEYDLGHFRGAIRPDIRNFRELPQWVRDNKEKFMDKRVVVYCTGGVRCEKFSGWMVREGYKDVGQLHGGIATYGKDPEVQGELWDGKMYVFDERIAVDVNHVNPTIVGKDWFDGTPCERYVNCGNPFCNRRILTSEENEDKYLRGCSHECRVHPRNRYVSKNELTQAEVIERLAAIGESLDQAATV.

A Rhodanese domain is found at 130-224 (LDKDTVVLDT…YGKDPEVQGE (95 aa)). Residue Cys-184 is the Cysteine persulfide intermediate of the active site.

This sequence belongs to the TrhO family.

The enzyme catalyses uridine(34) in tRNA + AH2 + O2 = 5-hydroxyuridine(34) in tRNA + A + H2O. Catalyzes oxygen-dependent 5-hydroxyuridine (ho5U) modification at position 34 in tRNAs. The protein is tRNA uridine(34) hydroxylase of Streptococcus pneumoniae (strain P1031).